We begin with the raw amino-acid sequence, 492 residues long: Histone-lysine N-methyltransferase PRDM7 (492 aa).

Residues 1–22 (MSPERSQEESPEGDTERTERKP) are disordered. The KRAB-related domain occupies 23 to 86 (MVKDAFKDIS…RRQAIKLQVD (64 aa)). The segment at 111–179 (EQSKHQKGMP…ELRRKETEGK (69 aa)) is disordered. Positions 135–150 (GTPNLLNTSDSEQAQK) are enriched in polar residues. A compositionally biased stretch (basic and acidic residues) spans 167–179 (LKLELRRKETEGK). The region spanning 244 to 358 (PGLRIGPSGI…PGCELLVWSG (115 aa)) is the SET domain.

The protein resides in the nucleus. It is found in the chromosome. It catalyses the reaction N(6),N(6)-dimethyl-L-lysyl(4)-[histone H3] + S-adenosyl-L-methionine = N(6),N(6),N(6)-trimethyl-L-lysyl(4)-[histone H3] + S-adenosyl-L-homocysteine + H(+). Functionally, histone methyltransferase that selectively methylates 'Lys-4' of dimethylated histone H3 (H3K4me2) to produce trimethylated 'Lys-4' histone H3 (H3K4me3). May play a role in epigenetic regulation of gene expression by defining an active chromatin state. The protein is Histone-lysine N-methyltransferase PRDM7 of Homo sapiens (Human).